A 356-amino-acid chain; its full sequence is Histidinol-phosphate aminotransferase 1 (356 aa).

Lys-217 bears the N6-(pyridoxal phosphate)lysine mark.

This sequence belongs to the class-II pyridoxal-phosphate-dependent aminotransferase family. Histidinol-phosphate aminotransferase subfamily. Homodimer. Pyridoxal 5'-phosphate serves as cofactor.

It catalyses the reaction L-histidinol phosphate + 2-oxoglutarate = 3-(imidazol-4-yl)-2-oxopropyl phosphate + L-glutamate. The protein operates within amino-acid biosynthesis; L-histidine biosynthesis; L-histidine from 5-phospho-alpha-D-ribose 1-diphosphate: step 7/9. The polypeptide is Histidinol-phosphate aminotransferase 1 (Burkholderia mallei (strain ATCC 23344)).